The primary structure comprises 435 residues: Temperature-sensitive sn-2 acyl-lipid omega-3 desaturase (ferredoxin), chloroplastic (435 aa).

Residues 1 to 42 constitute a chloroplast transit peptide; the sequence is MASSVLSECGFRPLPRFYPKHTTSFASNPKPTFKFNPPLKPP. 2 consecutive transmembrane segments (helical) span residues 111-131 and 134-154; these read MSYVVRDVAIVFGLAAVAAYF and WLLWPLYWFAQGTMFWALFVL. A Histidine box-1 motif is present at residues 156–160; sequence HDCGH. Residues 192–196 carry the Histidine box-2 motif; it reads HRTHH. 2 helical membrane-spanning segments follow: residues 268-290 and 297-319; these read VLTSTACWTAMAALLVCLNFVMG and LYGIPYWIFVMWLDFVTYLHHHG. The Histidine box-3 signature appears at 359–363; it reads HVIHH.

The protein belongs to the fatty acid desaturase type 1 family.

The protein localises to the plastid. It is found in the chloroplast membrane. The catalysed reaction is a (7Z,10Z)-hexadecadienoyl-containing glycerolipid + 2 reduced [2Fe-2S]-[ferredoxin] + O2 + 2 H(+) = a (7Z,10Z,13Z)-hexadecatrienoyl-containing glycerolipid + 2 oxidized [2Fe-2S]-[ferredoxin] + 2 H2O. The enzyme catalyses a (9Z,12Z)-octadecadienoyl-containing glycerolipid + 2 reduced [2Fe-2S]-[ferredoxin] + O2 + 2 H(+) = (9Z,12Z,15Z)-octadecatrienoyl-containing glycerolipid + 2 oxidized [2Fe-2S]-[ferredoxin] + 2 H2O. The protein operates within lipid metabolism; polyunsaturated fatty acid biosynthesis. Chloroplast omega-3 fatty acid desaturase introduces the third double bond in the biosynthesis of 16:3 and 18:3 fatty acids, important constituents of plant membranes. It is thought to use ferredoxin as an electron donor and to act on fatty acids esterified to galactolipids, sulfolipids and phosphatidylglycerol. The chain is Temperature-sensitive sn-2 acyl-lipid omega-3 desaturase (ferredoxin), chloroplastic from Arabidopsis thaliana (Mouse-ear cress).